Here is a 390-residue protein sequence, read N- to C-terminus: Chorismate synthase (390 aa).

The NADP(+) site is built by Arg48 and Arg54. Residues 132–134 (RSS), 244–245 (NA), Gly289, 304–308 (KPTSS), and Arg330 contribute to the FMN site. The tract at residues 362–390 (VGAHPAGAHPAGADPAGTHPGGPGGFQPG) is disordered. A compositionally biased stretch (low complexity) spans 363 to 379 (GAHPAGAHPAGADPAGT). Over residues 380-390 (HPGGPGGFQPG) the composition is skewed to gly residues.

It belongs to the chorismate synthase family. In terms of assembly, homotetramer. The cofactor is FMNH2.

The catalysed reaction is 5-O-(1-carboxyvinyl)-3-phosphoshikimate = chorismate + phosphate. Its pathway is metabolic intermediate biosynthesis; chorismate biosynthesis; chorismate from D-erythrose 4-phosphate and phosphoenolpyruvate: step 7/7. Catalyzes the anti-1,4-elimination of the C-3 phosphate and the C-6 proR hydrogen from 5-enolpyruvylshikimate-3-phosphate (EPSP) to yield chorismate, which is the branch point compound that serves as the starting substrate for the three terminal pathways of aromatic amino acid biosynthesis. This reaction introduces a second double bond into the aromatic ring system. This is Chorismate synthase from Methylobacterium sp. (strain 4-46).